The sequence spans 328 residues: Tetraacyldisaccharide 4'-kinase (328 aa).

ATP is bound at residue 55–62 (TAGGNGKT).

Belongs to the LpxK family.

The catalysed reaction is a lipid A disaccharide + ATP = a lipid IVA + ADP + H(+). The protein operates within glycolipid biosynthesis; lipid IV(A) biosynthesis; lipid IV(A) from (3R)-3-hydroxytetradecanoyl-[acyl-carrier-protein] and UDP-N-acetyl-alpha-D-glucosamine: step 6/6. Transfers the gamma-phosphate of ATP to the 4'-position of a tetraacyldisaccharide 1-phosphate intermediate (termed DS-1-P) to form tetraacyldisaccharide 1,4'-bis-phosphate (lipid IVA). This chain is Tetraacyldisaccharide 4'-kinase, found in Escherichia fergusonii (strain ATCC 35469 / DSM 13698 / CCUG 18766 / IAM 14443 / JCM 21226 / LMG 7866 / NBRC 102419 / NCTC 12128 / CDC 0568-73).